We begin with the raw amino-acid sequence, 201 residues long: Small ribosomal subunit protein uS4c (201 aa).

The disordered stretch occupies residues 15-43; the sequence is LGALPGLTRKTPKSGSNQKKKFHSGKKEQ. An S4 RNA-binding domain is found at 89–150; the sequence is MRLDNILFRL…NQRSKRLVQN (62 aa).

Belongs to the universal ribosomal protein uS4 family. In terms of assembly, part of the 30S ribosomal subunit. Contacts protein S5. The interaction surface between S4 and S5 is involved in control of translational fidelity.

It is found in the plastid. Its subcellular location is the chloroplast. One of the primary rRNA binding proteins, it binds directly to 16S rRNA where it nucleates assembly of the body of the 30S subunit. Its function is as follows. With S5 and S12 plays an important role in translational accuracy. This is Small ribosomal subunit protein uS4c (rps4) from Sorghum bicolor (Sorghum).